A 118-amino-acid polypeptide reads, in one-letter code: Small ribosomal subunit protein uS13 (118 aa).

Residues 94–118 are disordered; it reads GLPLRGQRTKTNARTRKGPRKPIRK.

Belongs to the universal ribosomal protein uS13 family. Part of the 30S ribosomal subunit. Forms a loose heterodimer with protein S19. Forms two bridges to the 50S subunit in the 70S ribosome.

Located at the top of the head of the 30S subunit, it contacts several helices of the 16S rRNA. In the 70S ribosome it contacts the 23S rRNA (bridge B1a) and protein L5 of the 50S subunit (bridge B1b), connecting the 2 subunits; these bridges are implicated in subunit movement. Contacts the tRNAs in the A and P-sites. The polypeptide is Small ribosomal subunit protein uS13 (Alcanivorax borkumensis (strain ATCC 700651 / DSM 11573 / NCIMB 13689 / SK2)).